Reading from the N-terminus, the 440-residue chain is Putative epoxide hydrolase (440 aa).

Residues 1–21 (MTKTLAEQPGEGAAPVSPSPS) are disordered. Positions 1-49 (MTKTLAEQPGEGAAPVSPSPSRRALLHGAAGLGALAAGAAVAGPGLAFA) form a signal peptide, tat-type signal.

Belongs to the peptidase S33 family. Post-translationally, predicted to be exported by the Tat system. The position of the signal peptide cleavage has not been experimentally proven.

The enzyme catalyses an epoxide + H2O = an ethanediol. This Stigmatella aurantiaca (strain DW4/3-1) protein is Putative epoxide hydrolase.